A 1224-amino-acid polypeptide reads, in one-letter code: MSPNPLQKPAIDAAPAPFADFAPPVRPQSTLRRAITAAYRRPETECLPPLVEAATQSKEIRDAAASTARKLIEALRGKHSGSGVEGLVQEYSLSSQEGVALMCLAERPVRIPDTATRDALIRDKIADGNWKSHLGRSRSLFVNAATWGLVVTGKLTSTVNDRTLAARVTRLISRCGEPVIRRGVDMAMRMMGEQFVTGETIEALKRSKELEEKGFSYSYDMLRERPTAADAERYYRDYESAIHATAKPRGRGIYEGPGISIKLSALHPRYRQAARVMGELLPRVKALALLAKNYDIGLNIDAEEADRLELSLDLLEVLCLDGDLSGWNGMGFVVQAYGKRCPFVLDFIIDLARRSGRRIMVRLVKGAYWDAEIKRAQLDGLADFPVFTRKIHTDVSYMPRTQAACRDRCGVPQFATHNAQTLAAIYHMAGKDFHVGKYEFQCLHGMGEPLYEEVVGRGKLDRPCRIYAPVGTHETLLAYLVRRLLENGANSSFVHRINDPKVSIDELIADPVEVVRAMPVVGAKHDRIALPAVLFGDARTNSAGFDLSNEETLASLTEALRESAAMKWTALPQFATGPAAGETRTVLNPGDHRDVVGSVTETRKRTHGAPCACRRRGAGLGGRLAERAACLDRAAELMQARMPTLLGLIIREAGKSALNAIAEVREAIDFLRYYAEQTRRTLGPATPLGPIVCISPWNFPLAIFTGQIAAALVAGNPVLAKPAEETPLIAAEGVRILREAGIPASALQLLPGDGRVGAALVAGRDAGVMFTGSTEVARLIQAQLADRLSPAGRPVPLIAETGGQNAMIVDSSALAGQVVGDVITSAFDSAGQRCSALRVLCLQEDVAGPHPDDAEGRAARHCISAAPIVFSVDVGPVITSEAKDNIEKHIERMRGLGRKVEQIGLASETGVGTFVPPTIIELEKLSDLQREVFGPVLHVIRYRRDDLDRLVDDVNATGYGLTFGLHTRLDETIAHVTSRIKAGNLYINRNIIGAVVGVQPFGGRGLSGTGPKAGGPLYLGRLVTTAPVPPQHSSVHTDPVLLDFAKWLDGKGARAEVEAARNAGSSSALGLDLELPGPVGERNLYTLHARGRILLVPATESGLYHQLAAALATGNSVAIDAASGLQASLKNLPQTVGLRVSWSKDWAADGPFAGALVEGDAERIRAVNKAIAALPGPLLLVQAASSGEIARNPDAYCLNWLVEEVSASINTAAAGGNASLMAIG.

The segment at 1 to 25 is disordered; sequence MSPNPLQKPAIDAAPAPFADFAPPV. The segment covering 9–23 has biased composition (low complexity); that stretch reads PAIDAAPAPFADFAP. A proline dehydrogenase region spans residues 164 to 501; it reads LAARVTRLIS…SFVHRINDPK (338 aa). Residues 576–1032 form an aldehyde dehydrogenase region; it reads TGPAAGETRT…VTTAPVPPQH (457 aa). Residues E800 and C834 contribute to the active site.

In the N-terminal section; belongs to the proline dehydrogenase family. This sequence in the C-terminal section; belongs to the aldehyde dehydrogenase family. Requires FAD as cofactor.

The catalysed reaction is L-proline + a quinone = (S)-1-pyrroline-5-carboxylate + a quinol + H(+). It catalyses the reaction L-glutamate 5-semialdehyde + NAD(+) + H2O = L-glutamate + NADH + 2 H(+). The protein operates within amino-acid degradation; L-proline degradation into L-glutamate; L-glutamate from L-proline: step 1/2. It participates in amino-acid degradation; L-proline degradation into L-glutamate; L-glutamate from L-proline: step 2/2. Oxidizes proline to glutamate for use as a carbon and nitrogen source, and also functions as a transcriptional repressor of its own gene. This Rhizobium meliloti (Ensifer meliloti) protein is Bifunctional protein PutA (putA).